The following is a 402-amino-acid chain: Dynactin subunit 2 (402 aa).

Residues 1–26 form a disordered region; sequence MADPKYADLPGIARNEPDVYETSDLP. Coiled-coil stretches lie at residues 101-132 and 357-402; these read PQQR…SAAE and VHLD…KRLQ.

This sequence belongs to the dynactin subunit 2 family. In terms of assembly, subunit of dynactin, a multiprotein complex part of a tripartite complex with dynein and a adapter, such as BICDL1, BICD2 or HOOK3. The dynactin complex is built around ACTR1A/ACTB filament and consists of an actin-related filament composed of a shoulder domain, a pointed end and a barbed end. Its length is defined by its flexible shoulder domain. The soulder is composed of 2 DCTN1 subunits, 4 DCTN2 and 2 DCTN3.

It localises to the cytoplasm. Its subcellular location is the cytoskeleton. The protein resides in the microtubule organizing center. It is found in the centrosome. The protein localises to the membrane. In terms of biological role, part of the dynactin complex that activates the molecular motor dynein for ultra-processive transport along microtubules. In the dynactin soulder domain, binds the ACTR1A filament and acts as a molecular ruler to determine the length. Modulates cytoplasmic dynein binding to an organelle, and plays a role in prometaphase chromosome alignment and spindle organization during mitosis. Involved in anchoring microtubules to centrosomes. This chain is Dynactin subunit 2 (DCTN2), found in Gallus gallus (Chicken).